A 428-amino-acid chain; its full sequence is MAKTVAYFYDPDVGNFHYGAGHPMKPHRLALTHSLVLHYGLYKKMIVFKPYQASQHDMCRFHSEDYIDFLQRVSPTNMQGFTKSLNAFNVGDDCPVFPGLFEFCSRYTGASLQGATQLNNKICDIAINWAGGLHHAKKFEASGFCYVNDIVIGILELLKYHPRVLYIDIDIHHGDGVQEAFYLTDRVMTVSFHKYGNYFFPGTGDMYEVGAESGRYYCLNVPLRDGIDDQSYKHLFQPVINQVVDFYQPTCIVLQCGADSLGCDRLGCFNLSIRGHGECVEYVKSFNIPLLVLGGGGYTVRNVARCWTYETSLLVEEAISEELPYSEYFEYFAPDFTLHPDVSTRIENQNSRQYLDQIRQTIFENLKMLNHAPSVQIHDVPADLLTYDRTDEADAEERGPEENYSRPEAPNEFYDGDHDNDKESDVEI.

A histone deacetylase region spans residues 3–316 (KTVAYFYDPD…WTYETSLLVE (314 aa)). Positions 17, 21, and 25 each coordinate 1D-myo-inositol 1,4,5,6-tetrakisphosphate. The active site involves His135. Residues Asp170, His172, and Asp259 each coordinate Zn(2+). Arg265 serves as a coordination point for 1D-myo-inositol 1,4,5,6-tetrakisphosphate. Basic and acidic residues-rich tracts occupy residues 388 to 405 (DRTDEADAEERGPEENYS) and 415 to 428 (DGDHDNDKESDVEI). The tract at residues 388 to 428 (DRTDEADAEERGPEENYSRPEAPNEFYDGDHDNDKESDVEI) is disordered. Position 424 is a phosphoserine (Ser424).

Belongs to the histone deacetylase family. HD type 1 subfamily. As to quaternary structure, interacts with HDAC7 and HDAC9. Interacts with DAXX, KDM4A, HDAC10 and DACH1. Found in a complex with NCOR1 and NCOR2. Component of the N-Cor repressor complex, at least composed of NCOR1, NCOR2, HDAC3, TBL1X, TBL1R, CORO2A and GPS2. Interacts with BCOR, MJD2A/JHDM3A, NRIP1, PRDM6 and SRY. Interacts with BTBD14B. Interacts with GLIS2. Interacts (via the DNA-binding domain) with NR2C1; the interaction recruits phosphorylated NR2C1 to PML bodies for sumoylation. Component of the Notch corepressor complex. Interacts with CBFA2T3 and NKAP. Interacts with APEX1; the interaction is not dependent on the acetylated status of APEX1. Interacts with ZMYND15. Interacts with SMRT/NCOR2 and BCL6 on DNA enhancer elements. Interacts with INSM1. Interacts with XBP1 isoform 1; the interaction occurs in endothelial cell (EC) under disturbed flow. Interacts (via C-terminus) with CCAR2 (via N-terminus). Interacts with and deacetylates MEF2D. Interacts with BEND3. Interacts with NKAPL. Interacts with DHX36; this interaction occurs in a RNA-dependent manner. Interacts weakly with CRY1; this interaction is enhanced in the presence of FBXL3. Interacts with FBXL3 and BMAL1. Interacts with NCOR1. Interacts with RARA. Interacts with SETD5. In terms of assembly, (Microbial infection) Interacts with human cytomegalovirus (HHV-5) immediate early protein IE1; this interaction decreases histone acetylation and allows transcriptional activation by the virus. Zn(2+) serves as cofactor. Post-translationally, sumoylated in vitro. In terms of processing, deubiquitinated on 'Lys-63'-linked ubiquitin chains by USP38; leading to a decreased level of histone acetylation. As to expression, widely expressed.

The protein resides in the nucleus. It is found in the chromosome. Its subcellular location is the cytoplasm. It localises to the cytosol. The enzyme catalyses N(6)-acetyl-L-lysyl-[histone] + H2O = L-lysyl-[histone] + acetate. The catalysed reaction is N(6)-acetyl-L-lysyl-[protein] + H2O = L-lysyl-[protein] + acetate. It catalyses the reaction N(6)-(2E)-butenoyl-L-lysyl-[protein] + H2O = (2E)-2-butenoate + L-lysyl-[protein]. It carries out the reaction N(6)-(2-hydroxyisobutanoyl)-L-lysyl-[protein] + H2O = 2-hydroxy-2-methylpropanoate + L-lysyl-[protein]. The enzyme catalyses N(6)-[(S)-lactoyl]-L-lysyl-[protein] + H2O = (S)-lactate + L-lysyl-[protein]. Its activity is regulated as follows. Inositol tetraphosphate (1D-myo-inositol 1,4,5,6-tetrakisphosphate) promotes the histone deacetylase activity by acting as an intermolecular glue between HDAC3 and NCOR2, thereby promoting its association with the N-Cor complex, a prerequisite for the histone deacetylase activity. In terms of biological role, histone deacetylase that catalyzes the deacetylation of lysine residues on the N-terminal part of the core histones (H2A, H2B, H3 and H4), and some other non-histone substrates. Histone deacetylation gives a tag for epigenetic repression and plays an important role in transcriptional regulation, cell cycle progression and developmental events. Histone deacetylases act via the formation of large multiprotein complexes, such as N-Cor repressor complex, which activate the histone deacetylase activity. Participates in the BCL6 transcriptional repressor activity by deacetylating the H3 'Lys-27' (H3K27) on enhancer elements, antagonizing EP300 acetyltransferase activity and repressing proximal gene expression. Acts as a molecular chaperone for shuttling phosphorylated NR2C1 to PML bodies for sumoylation. Contributes, together with XBP1 isoform 1, to the activation of NFE2L2-mediated HMOX1 transcription factor gene expression in a PI(3)K/mTORC2/Akt-dependent signaling pathway leading to endothelial cell (EC) survival under disturbed flow/oxidative stress. Regulates both the transcriptional activation and repression phases of the circadian clock in a deacetylase activity-independent manner. During the activation phase, promotes the accumulation of ubiquitinated BMAL1 at the E-boxes and during the repression phase, blocks FBXL3-mediated CRY1/2 ubiquitination and promotes the interaction of CRY1 and BMAL1. The NCOR1-HDAC3 complex regulates the circadian expression of the core clock gene BMAL1 and the genes involved in lipid metabolism in the liver. Also functions as a deacetylase for non-histone targets, such as KAT5, MEF2D, MAPK14, RARA and STAT3. Serves as a corepressor of RARA, mediating its deacetylation and repression, leading to inhibition of RARE DNA element binding. In association with RARA, plays a role in the repression of microRNA-10a and thereby in the inflammatory response. In addition to protein deacetylase activity, also acts as a protein-lysine deacylase by recognizing other acyl groups: catalyzes removal of (2E)-butenoyl (crotonyl), lactoyl (lactyl) and 2-hydroxyisobutanoyl (2-hydroxyisobutyryl) acyl groups from lysine residues, leading to protein decrotonylation, delactylation and de-2-hydroxyisobutyrylation, respectively. Catalyzes decrotonylation of MAPRE1/EB1. Mediates delactylation NBN/NBS1, thereby inhibiting DNA double-strand breaks (DSBs) via homologous recombination (HR). The sequence is that of Histone deacetylase 3 (HDAC3) from Homo sapiens (Human).